The sequence spans 219 residues: N-(5'-phosphoribosyl)anthranilate isomerase (219 aa).

It belongs to the TrpF family.

It carries out the reaction N-(5-phospho-beta-D-ribosyl)anthranilate = 1-(2-carboxyphenylamino)-1-deoxy-D-ribulose 5-phosphate. The protein operates within amino-acid biosynthesis; L-tryptophan biosynthesis; L-tryptophan from chorismate: step 3/5. This chain is N-(5'-phosphoribosyl)anthranilate isomerase, found in Chloroherpeton thalassium (strain ATCC 35110 / GB-78).